Consider the following 155-residue polypeptide: Protein Smg homolog (155 aa).

This sequence belongs to the Smg family.

This chain is Protein Smg homolog, found in Methylococcus capsulatus (strain ATCC 33009 / NCIMB 11132 / Bath).